The following is a 71-amino-acid chain: Frenatin 2.3S (71 aa).

An N-terminal signal peptide occupies residues 1–22 (MAFLKKSLFLVLFLGLVSLSMG). The interval 21-56 (MGEREKREEEEEEEEENKEEEANEEGKGESEEKRGL) is disordered. Positions 23–54 (EREKREEEEEEEEENKEEEANEEGKGESEEKR) are excised as a propeptide. Over residues 28–43 (EEEEEEEEENKEEEAN) the composition is skewed to acidic residues. A compositionally biased stretch (basic and acidic residues) spans 44–55 (EEGKGESEEKRG). G70 is modified (glycine amide; in Frenatin 2.1S).

This sequence belongs to the frog skin active peptide (FSAP) family. Frenatin subfamily. Frenatin 2.3S is not amidated. As to expression, expressed by the skin glands.

The protein resides in the secreted. In terms of biological role, antimicrobial peptide with potent activity against Gram-negative bacteria. Shows immunostimulatory actions both in vitro and in vivo. In vitro, is cytotoxic to non-small cell lung adenocarcinoma A549 cells. Also, stimulates production of pro-inflammatory cytokines by mouse peritoneal macrophages and down-regulates production of the anti-inflammatory cytokine IL-10 by lipopolysaccharide (LPS)-stimulated cells. In vivo, intraperitoneal injection in mice enhances the activation state and homing capacity of Th1 type lymphocytes and promotes the recruitment, activation and tumoricidal capacities of peritoneal NK cells. Has a very weak activity in stimulation of insulin release and a weak hemolytic activity. Its function is as follows. Antimicrobial peptide with potent activity against some Gram-positive and Gram-negative bacteria. Has a multifunctional mode of action. It displays depolarization and bacterial cell leakage, and can also internalize into bacterial cells and alter specific gene expression involved in bacterial resistance mechanisms. Does not agglutinate bacteria and lipid vesicles, even a high concentrations. Also displays moderate cellular protection against yellow fever virus (YFV)-infected Vero cells without causing significant cytotoxicity. Shows a weak hemolytic activity, and is not cytotoxic to monocytes. Frenatin 2.3S (version without Gly-71) shows no or very weak antibacterial activity, shows no or very weak cytotoxicity to lung adenocarcinoma A549 cells and shows very weak hemolysis. It only stimulates production of pro-inflammatory cytokines IL-23 (but not IL-1beta and TNF-alpha) by mouse peritoneal macrophages and has no effect on the production of the anti-inflammatory cytokine IL-10. Frenatin 2.3S (version without Gly-71) very weakly stimulates insulin release. The sequence is that of Frenatin 2.3S from Sphaenorhynchus lacteus (Orinoco lime treefrog).